The following is a 316-amino-acid chain: Olfactory receptor 52A5 (316 aa).

The Extracellular portion of the chain corresponds to 1 to 27; it reads MPTFNGSVFMPSAFILIGIPGLESVQC. N-linked (GlcNAc...) asparagine glycosylation is present at asparagine 5. A helical transmembrane segment spans residues 28–48; it reads WIGIPFSAMYLIGVIGNSLIL. Topologically, residues 49 to 56 are cytoplasmic; the sequence is VIIKYENS. Residues 57 to 77 traverse the membrane as a helical segment; the sequence is LHIPMYIFLAMLAATDIALNT. At 78–101 the chain is on the extracellular side; that stretch reads CILPKMLGIFWFHLPEISFDACLF. The helical transmembrane segment at 102–122 threads the bilayer; sequence QMWLIHSFQAIESGILLAMAL. The Cytoplasmic segment spans residues 123–141; the sequence is DRYVAICIPLRHATIFSQQ. The chain crosses the membrane as a helical span at residues 142-162; that stretch reads FLTHIGLGVTLRAAILIIPSL. At 163–199 the chain is on the extracellular side; the sequence is GLIKCCLKHYRTTVISHSYCEHMAIVKLATEDIRVNK. Residues 200–220 form a helical membrane-spanning segment; the sequence is IYGLFVAFAILGFDIIFITLS. Residues 221 to 240 lie on the Cytoplasmic side of the membrane; that stretch reads YVQIFITVFQLPQKEARFKA. A helical transmembrane segment spans residues 241-261; it reads FNTCIAHICVFLQFYLLAFFS. Residues 262 to 276 are Extracellular-facing; that stretch reads FFTHRFGSHIPPYIH. A helical membrane pass occupies residues 277 to 297; that stretch reads ILLSNLYLLVPPFLNPIVYGV. The Cytoplasmic portion of the chain corresponds to 298–316; it reads KTKQIRDHIVKVFFFKKVT.

This sequence belongs to the G-protein coupled receptor 1 family.

It is found in the cell membrane. Its function is as follows. Odorant receptor. This chain is Olfactory receptor 52A5 (OR52A5), found in Homo sapiens (Human).